The sequence spans 2348 residues: Transcription factor HIVEP3 (2348 aa).

The segment at 1 to 105 (MDPDQSIKGT…AFMSPGKPEH (105 aa)) is disordered. The span at 27 to 72 (IQTSVSSSAPYPGSGTTAPSESATQELLATQPFSGPSQEKTGQQQK) shows a compositional bias: polar residues. 2 C2H2-type zinc fingers span residues 185 to 207 (YICQ…IRSH) and 213 to 235 (YPCG…RKSH). Positions 185–235 (YICQYCSRPCAKPSVLQKHIRSHTGERPYPCGPCGFSFKTKSNLYKHRKSH) are ZAS1. The interval 204–1055 (IRSHTGERPY…KGKQESSEEP (852 aa)) is no DNA binding activity or transactivation activity, but complete prevention of TRAF-dependent NF-Kappa-B activation; associates with TRAF2 and JUN. Disordered regions lie at residues 239-401 (IKAG…SPPN), 475-532 (DSVK…PLLR), and 561-628 (ADPE…TKKG). An acidic 1 region spans residues 257–280 (EMERIPGEEFEEPTEGESTDSEEE). Residues 264-281 (EEFEEPTEGESTDSEEET) show a composition bias toward acidic residues. Residues 298–323 (PLLSSSLYSSGSHGSSQERCSLSQSS) show a composition bias toward low complexity. The span at 338 to 352 (SSEHPLSHKPEDTHT) shows a compositional bias: basic and acidic residues. Composition is skewed to polar residues over residues 372-401 (TFLS…SPPN) and 485-495 (TRRSSVESPKS). Low complexity-rich tracts occupy residues 513-527 (QSLL…STHP) and 589-605 (PLGG…SSKD). The segment covering 606–623 (PTSKPSDEPEPKESDLTK) has biased composition (basic and acidic residues). The segment at 633 to 663 (GANYECTICGARYKKRDNYEAHKKYYCSELQ) adopts a CCHC HIVEP-type zinc-finger fold. 5 disordered regions span residues 692–1098 (KLGA…PPYT), 1229–1274 (LPPV…TSAP), 1386–1427 (EGCS…KADE), 1441–1555 (STED…EGTD), and 1654–1694 (EVHL…GEPA). The segment covering 736-749 (STKSPAEASKSAPS) has biased composition (low complexity). The interval 844 to 865 (EEPDRPDTEPEPPPKEPEKTEE) is acidic 2. Positions 845–865 (EPDRPDTEPEPPPKEPEKTEE) are enriched in basic and acidic residues. A Nuclear localization signal motif is present at residues 885-891 (PKKKRLR). Residues 893 to 929 (AEMAQSSGESSFESSVPLSRSPSQESSISLSGSSRSA) are compositionally biased toward low complexity. The segment covering 930-939 (SFDREDHGKA) has biased composition (basic and acidic residues). Polar residues-rich tracts occupy residues 975 to 985 (SEQSPNVPHSS), 1062 to 1073 (TKSSVPQISVGT), and 1247 to 1256 (SSSTEYSSDI). Residues 1409–1433 (METQQQKRVKEEEASKADEKLELVS) are a coiled coil. Basic and acidic residues-rich tracts occupy residues 1416-1427 (RVKEEEASKADE), 1442-1452 (TEDRKKTEKPH), and 1518-1527 (VKKEDPKEQT). The span at 1538–1547 (LPLSDTSPKP) shows a compositional bias: low complexity. Over residues 1665-1694 (SQKDPARVEKEEKQGKAEEGTPTSKRGEPA) the composition is skewed to basic and acidic residues. 2 consecutive C2H2-type zinc fingers follow at residues 1720–1742 (YVCE…IRTH) and 1748–1772 (YVCK…SKAH). The interval 1720-1772 (YVCEECGIRCKKPSMLKKHIRTHTDVRPYVCKHCHFAFKTKGNLTKHMKSKAH) is ZAS2. The tract at residues 1783-1841 (EELEAEEGTSDDLHQDSEGQEGAEAVEEHQFSDLEDSDSDSDLDEDEEEEEEEEESQDE) is acidic 3. 2 disordered regions span residues 1786–1990 (EAEE…HLCG) and 2009–2038 (PAGL…ESPP). Positions 1815–1840 (DLEDSDSDSDLDEDEEEEEEEEESQD) are enriched in acidic residues. Polar residues predominate over residues 1871 to 1902 (PDSTSDEVPQGSSISEATHLTASSCSTPSRGT). 5 consecutive repeat copies span residues 1897 to 1900 (TPSR), 1927 to 1930 (SPRR), 1933 to 1936 (SPSK), 1961 to 1964 (SPAR), and 2024 to 2027 (SPTR). Polar residues predominate over residues 1952–1961 (KNDSSPQQCS). Residues 2053–2148 (SPSADKSGLG…QLLSRAPCPL (96 aa)) are 5 X 4 AA tandem repeats of [ST]-P-X-[RK]. Disordered regions lie at residues 2184-2265 (SDLT…QGHQ) and 2284-2348 (KASS…PPSI). Residues 2203 to 2216 (SPSASVSPVAKVSK) are compositionally biased toward low complexity. Over residues 2293-2314 (RSSSMDCLAETSTYSPPRSRNL) the composition is skewed to polar residues.

Interacts with TRAF1 and TRAF2 as well as with JUN. Forms a multimeric complex with RUNX2 and E3 ubiquitin ligase WWP1. Phosphorylated on threonine and serine residues. Phosphorylation by cyclin-dependent kinase CDK1 decreases HIVEP3 DNA binding affinity, and by epidermal growth factor receptor kinase increases its DNA binding affinity. In terms of tissue distribution, expressed in macrophages, lymphocytes, brain, thymus, spleen and bone marrow. Expressed in osteoblasts, whole bone and, to a lesser extent, in osteoclasts.

Its subcellular location is the cytoplasm. It localises to the nucleus. Its function is as follows. Plays a role of transcription factor; binds to recognition signal sequences (Rss heptamer) for somatic recombination of immunoglobulin and T-cell receptor gene segments; Also binds to the kappa-B motif of gene such as S100A4, involved in cell progression and differentiation. Kappa-B motif is a gene regulatory element found in promoters and enhancers of genes involved in immunity, inflammation, and growth and that responds to viral antigens, mitogens, and cytokines. Involvement of HIVEP3 in cell growth is strengthened by the fact that its down-regulation promotes cell cycle progression with ultimate formation of multinucleated giant cells. Strongly inhibits TNF-alpha-induced NF-kappa-B activation; Interferes with nuclear factor NF-kappa-B by several mechanisms: as transcription factor, by competing for Kappa-B motif and by repressing transcription in the nucleus; through a non transcriptional process, by inhibiting nuclear translocation of RELA by association with TRAF2, an adapter molecule in the tumor necrosis factor signaling, which blocks the formation of IKK complex. Interaction with TRAF proteins inhibits both NF-Kappa-B-mediated and c-Jun N-terminal kinase/JNK-mediated responses that include apoptosis and pro-inflammatory cytokine gene expression. Positively regulates the expression of IL2 in T-cell. Essential regulator of adult bone formation. This Mus musculus (Mouse) protein is Transcription factor HIVEP3 (Hivep3).